The sequence spans 215 residues: MIQVIVLSGPIGAGKSSLTSILAEHLGTQAFYEGVDSNPVLPLYYKDMKRYTFLLNTYLLNHRLAQINQAIQEKNSVSDRSIYEDALFFKMNADSSVADPTEFKIYNDLLENMMEDTPGNPSKKPDLLIYIHVSLDTMLKRIKKRGRSFEQISTDPSLKDYYARLLKYYEPWYENYNASPKIMINGDKLDFVTNMNAQKEVLKEIDEKLREIGNL.

Residue 9 to 17 (GPIGAGKSS) coordinates ATP. 3 residues coordinate substrate: E33, Y45, and N56. D79 functions as the Proton acceptor in the catalytic mechanism. Substrate is bound by residues R80, D85, and E150.

It belongs to the DCK/DGK family. Heterodimer of a deoxyadenosine (DAK) and a deoxyguanosine kinase (DGK).

It carries out the reaction 2'-deoxyadenosine + ATP = dAMP + ADP + H(+). DGK/DAK plays an essential role in generating the deoxyribonucleotide precursors, dGTP and dATP, for DNA metabolism. The protein is Deoxyadenosine kinase of Lactobacillus acidophilus (strain ATCC 700396 / NCK56 / N2 / NCFM).